A 420-amino-acid polypeptide reads, in one-letter code: MGMTMIEKIIAAHTNRDKVKPGDIVNARIDFVLGNDVTTPVAVKEFNKIGIDEVFDQDRIAIVPDHFTPNKDIKSAEQCKFIREFARDKGIHNYFEIGEMGIEHCLLPEKGLALPGEIIIGADSHTCTYGALGAFATGVGSTDMAAAMATGYTWFKVPSTIQFVYNGELKPWVSGKDLILYTIGDIGVDGALYRAMEFTGETIENLSMDNRMTISNMAIEAGGKCGLIAPDEKTFKYLENRAQRDYTPCYSDDDAEYEKVIEYDVSDIEPQVAFPHLPENTRPISEEGDIKIDQAVIGSCTNGRMEDLRIAAGILKEKQVHHDVRCIVIPGTQDIYKQALKEGLIEIFIEAGAAVSTPTCGPCLGGHMGILARGEKAIATTNRNFVGRMGHPESEVYLANPAVAAASAIKGYIAHPEEVL.

[4Fe-4S] cluster-binding residues include Cys300, Cys360, and Cys363.

Belongs to the aconitase/IPM isomerase family. LeuC type 2 subfamily. As to quaternary structure, heterodimer of LeuC and LeuD. It depends on [4Fe-4S] cluster as a cofactor.

It catalyses the reaction (2R,3S)-3-isopropylmalate = (2S)-2-isopropylmalate. The protein operates within amino-acid biosynthesis; L-leucine biosynthesis; L-leucine from 3-methyl-2-oxobutanoate: step 2/4. Catalyzes the isomerization between 2-isopropylmalate and 3-isopropylmalate, via the formation of 2-isopropylmaleate. The sequence is that of 3-isopropylmalate dehydratase large subunit from Halothermothrix orenii (strain H 168 / OCM 544 / DSM 9562).